Here is a 156-residue protein sequence, read N- to C-terminus: Small ribosomal subunit protein uS7 (156 aa).

This sequence belongs to the universal ribosomal protein uS7 family. In terms of assembly, part of the 30S ribosomal subunit. Contacts proteins S9 and S11.

Functionally, one of the primary rRNA binding proteins, it binds directly to 16S rRNA where it nucleates assembly of the head domain of the 30S subunit. Is located at the subunit interface close to the decoding center, probably blocks exit of the E-site tRNA. The sequence is that of Small ribosomal subunit protein uS7 from Geotalea uraniireducens (strain Rf4) (Geobacter uraniireducens).